The sequence spans 480 residues: Ribulose bisphosphate carboxylase large chain (480 aa).

A propeptide spanning residues Met1–Ser2 is cleaved from the precursor. Pro3 is modified (N-acetylproline). Lys14 carries the post-translational modification N6,N6,N6-trimethyllysine. 2 residues coordinate substrate: Asn123 and Thr173. Lys175 functions as the Proton acceptor in the catalytic mechanism. Lys177 is a substrate binding site. 3 residues coordinate Mg(2+): Lys201, Asp203, and Glu204. Residue Lys201 is modified to N6-carboxylysine. The active-site Proton acceptor is His294. Arg295, His327, and Ser379 together coordinate substrate.

The protein belongs to the RuBisCO large chain family. Type I subfamily. Heterohexadecamer of 8 large chains and 8 small chains; disulfide-linked. The disulfide link is formed within the large subunit homodimers. Mg(2+) serves as cofactor. The disulfide bond which can form in the large chain dimeric partners within the hexadecamer appears to be associated with oxidative stress and protein turnover.

Its subcellular location is the plastid. The protein localises to the chloroplast. It catalyses the reaction 2 (2R)-3-phosphoglycerate + 2 H(+) = D-ribulose 1,5-bisphosphate + CO2 + H2O. The enzyme catalyses D-ribulose 1,5-bisphosphate + O2 = 2-phosphoglycolate + (2R)-3-phosphoglycerate + 2 H(+). Functionally, ruBisCO catalyzes two reactions: the carboxylation of D-ribulose 1,5-bisphosphate, the primary event in carbon dioxide fixation, as well as the oxidative fragmentation of the pentose substrate in the photorespiration process. Both reactions occur simultaneously and in competition at the same active site. This Phalaenopsis aphrodite subsp. formosana (Moth orchid) protein is Ribulose bisphosphate carboxylase large chain.